The chain runs to 470 residues: 3-isopropylmalate dehydratase large subunit (470 aa).

The [4Fe-4S] cluster site is built by Cys-346, Cys-406, and Cys-409.

Belongs to the aconitase/IPM isomerase family. LeuC type 1 subfamily. Heterodimer of LeuC and LeuD. [4Fe-4S] cluster is required as a cofactor.

The catalysed reaction is (2R,3S)-3-isopropylmalate = (2S)-2-isopropylmalate. It functions in the pathway amino-acid biosynthesis; L-leucine biosynthesis; L-leucine from 3-methyl-2-oxobutanoate: step 2/4. Catalyzes the isomerization between 2-isopropylmalate and 3-isopropylmalate, via the formation of 2-isopropylmaleate. This is 3-isopropylmalate dehydratase large subunit from Shouchella clausii (strain KSM-K16) (Alkalihalobacillus clausii).